We begin with the raw amino-acid sequence, 422 residues long: PHAF1 protein T01G9.2 (422 aa).

It belongs to the PHAF1 family.

It localises to the cytoplasm. Its subcellular location is the preautophagosomal structure. May play a regulatory role in autophagic activity. The polypeptide is PHAF1 protein T01G9.2 (Caenorhabditis elegans).